Reading from the N-terminus, the 175-residue chain is Nucleoside diphosphate kinase 6 (175 aa).

6 residues coordinate ATP: K15, F63, R91, T97, R111, and N121. H124 (pros-phosphohistidine intermediate) is an active-site residue.

Belongs to the NDK family. Mg(2+) is required as a cofactor.

The enzyme catalyses a 2'-deoxyribonucleoside 5'-diphosphate + ATP = a 2'-deoxyribonucleoside 5'-triphosphate + ADP. It carries out the reaction a ribonucleoside 5'-diphosphate + ATP = a ribonucleoside 5'-triphosphate + ADP. Functionally, major role in the synthesis of nucleoside triphosphates other than ATP. The ATP gamma phosphate is transferred to the NDP beta phosphate via a ping-pong mechanism, using a phosphorylated active-site intermediate. This is Nucleoside diphosphate kinase 6 (nme6) from Danio rerio (Zebrafish).